Here is a 975-residue protein sequence, read N- to C-terminus: MITEKPSWIRHEGLQIFSIDIQPGGIRFATGGGDQKIRIWSMKSVAKDNDSDDSSQRLLATIRDHFGTVNCVRWAHHGRYLASGSDDQVIQIHERKAGTGTSEFGSGEPPDVENWKVVMTLRGHTADVVDLNWSPDDSTLASGSLDNTVHIWSMANGICTAVLRGHSSLVKGVTWDPIGSFIASQSDDKTVIIWRTSDWSLAHRTEGHWSKSLGSTFFRRLAWSPCGHFITTTHGFQKPRHSAPVLERGEWSATFDFLGHNAPVVVVKFNHSMFRKHLSSGQDAKAAPAGWANGASKASSKEHQPYNVIAIGSQDRTITVWTTASARPLFVAKHFFTQSVVDLSWSPDGYSLFACSLDGSVATFHFEAKELGYRLRDAELDELKKNRYGDVRGRQSNIAESPAQLLLEEASAKQSASKKVSSVQQFQSPPKVSTDAPNPSTSVPNQKAPEALPEDEKKTAGSTADDINKAPRLSSPVKQREYRRPDGRKRIIPEAVGFPSNQDMSNRSQNQGVDFSSLDQRMILGENGTRPSYSASGNCNNCGVRERSGITARTNISESLVIQKASAGAGSDGRLSIEQSGSVVPGSLASCSSLSIHVFNKKDNEDSLPVRLEAKPVERSAGDMIGLGGAFSTKETEITCTRGTETLWSDRISAKVTVLAGNANFWAVGCEDGCLQVYTKCGRRAMPAMMMGSAAVFIDCDECWKLLLVTRRGLMYIWDLYTRTCVLHDSLASLVTSPDEAAGKDTGTVKVISAKFSRCGSPLVVLASRHAFLYDTSLKCWLRIADDCFPASNFASSFSSTQGGELGKLQIDIGKFMARKPIWSRVTDDGVQTRSHLETQLAASLALKSPQEYRQCLLSYIRFLAREADESRLREVCESFLGPPMGMVDAASSADLKNPSWDPDVLGMKKHKLLREDILPSMATNRKVQRLLNEFMDLLSEYEAAETNVEQMDVTPTPPPPPPAAATEGNNNGAS.

7 WD repeats span residues 10–50, 64–103, 123–162, 165–204, 214–256, 259–331, and 335–374; these read RHEG…KDND, DHFGTVNCVRWAHHGRYLASGSDDQVIQIHERKAGTGTSE, GHTADVVDLNWSPDDSTLASGSLDNTVHIWSMANGICTAV, GHSSLVKGVTWDPIGSFIASQSDDKTVIIWRTSDWSLAHR, GSTF…ATFD, GHNA…PLFV, and FFTQSVVDLSWSPDGYSLFACSLDGSVATFHFEAKELGYR. Residues 418 to 433 are compositionally biased toward low complexity; the sequence is KKVSSVQQFQSPPKVS. Disordered regions lie at residues 418–510 and 948–975; these read KKVS…RSQN and NVEQMDVTPTPPPPPPAAATEGNNNGAS. Positions 435-445 are enriched in polar residues; the sequence is DAPNPSTSVPN. The segment covering 478–492 has biased composition (basic and acidic residues); that stretch reads KQREYRRPDGRKRII. The segment covering 499–510 has biased composition (polar residues); the sequence is PSNQDMSNRSQN. The stretch at 923-954 forms a coiled coil; that stretch reads ATNRKVQRLLNEFMDLLSEYEAAETNVEQMDV.

It belongs to the WD repeat HIR1 family.

The protein localises to the nucleus. Functionally, histone chaperone involved in maintining knox genes silencing throughout leaf development. This is Protein HIRA from Oryza sativa subsp. japonica (Rice).